A 289-amino-acid chain; its full sequence is 1D-myo-inositol 2-acetamido-2-deoxy-alpha-D-glucopyranoside deacetylase 1 (289 aa).

Zn(2+) is bound by residues histidine 4, aspartate 7, and histidine 140.

The protein belongs to the MshB deacetylase family. Zn(2+) is required as a cofactor.

The enzyme catalyses 1D-myo-inositol 2-acetamido-2-deoxy-alpha-D-glucopyranoside + H2O = 1D-myo-inositol 2-amino-2-deoxy-alpha-D-glucopyranoside + acetate. Catalyzes the deacetylation of 1D-myo-inositol 2-acetamido-2-deoxy-alpha-D-glucopyranoside (GlcNAc-Ins) in the mycothiol biosynthesis pathway. In Frankia alni (strain DSM 45986 / CECT 9034 / ACN14a), this protein is 1D-myo-inositol 2-acetamido-2-deoxy-alpha-D-glucopyranoside deacetylase 1.